The sequence spans 349 residues: Tetraacyldisaccharide 4'-kinase (349 aa).

Residue 58-65 (TAGGSGKT) coordinates ATP.

Belongs to the LpxK family.

It catalyses the reaction a lipid A disaccharide + ATP = a lipid IVA + ADP + H(+). It functions in the pathway glycolipid biosynthesis; lipid IV(A) biosynthesis; lipid IV(A) from (3R)-3-hydroxytetradecanoyl-[acyl-carrier-protein] and UDP-N-acetyl-alpha-D-glucosamine: step 6/6. Functionally, transfers the gamma-phosphate of ATP to the 4'-position of a tetraacyldisaccharide 1-phosphate intermediate (termed DS-1-P) to form tetraacyldisaccharide 1,4'-bis-phosphate (lipid IVA). This chain is Tetraacyldisaccharide 4'-kinase, found in Shewanella amazonensis (strain ATCC BAA-1098 / SB2B).